The chain runs to 183 residues: TATA-box-binding protein (183 aa).

2 tandem repeats follow at residues 10–86 (IVNV…IKEL) and 101–177 (IQNM…LDTI).

Belongs to the TBP family.

General factor that plays a role in the activation of archaeal genes transcribed by RNA polymerase. Binds specifically to the TATA box promoter element which lies close to the position of transcription initiation. This chain is TATA-box-binding protein (tbp), found in Methanocaldococcus jannaschii (strain ATCC 43067 / DSM 2661 / JAL-1 / JCM 10045 / NBRC 100440) (Methanococcus jannaschii).